The following is a 555-amino-acid chain: Spermine oxidase (555 aa).

FAD-binding positions include Ala35, Glu55, Arg63, 79–80 (TW), and Val261. Residues 271 to 307 (AHPRGPEIEPRGEGDHNHDTGEGGQSGENPQQGRWDE) are disordered. Basic and acidic residues predominate over residues 274 to 291 (RGPEIEPRGEGDHNHDTG). Residues Glu519 and 528 to 529 (TT) contribute to the FAD site.

The protein belongs to the flavin monoamine oxidase family. FAD serves as cofactor. Widely expressed. Isoform 1 and isoform 2 are expressed at higher level in brain and skeletal muscle. Isoform 7 is found in brain and spleen, isoform 10 is widely expressed but found at lower level in heart, kidney, liver and lung.

It localises to the cytoplasm. Its subcellular location is the nucleus. It catalyses the reaction spermine + O2 + H2O = 3-aminopropanal + spermidine + H2O2. Its pathway is amine and polyamine degradation; spermine degradation. In terms of biological role, flavoenzyme which catalyzes the oxidation of spermine to spermidine. Can also use N(1)-acetylspermine and spermidine as substrates, with different affinity depending on the isoform (isozyme) and on the experimental conditions. Plays an important role in the regulation of polyamine intracellular concentration and has the potential to act as a determinant of cellular sensitivity to the antitumor polyamine analogs. May contribute to beta-alanine production via aldehyde dehydrogenase conversion of 3-amino-propanal. This Mus musculus (Mouse) protein is Spermine oxidase (Smox).